Here is a 181-residue protein sequence, read N- to C-terminus: Probable pyruvoyl-dependent arginine decarboxylase (181 aa).

Ser-43 is modified (pyruvic acid (Ser)).

Belongs to the PdaD family. Requires pyruvate as cofactor.

The catalysed reaction is L-arginine + H(+) = agmatine + CO2. The protein is Probable pyruvoyl-dependent arginine decarboxylase of Chlorobium phaeobacteroides (strain BS1).